The primary structure comprises 725 residues: Calcium-responsive transcription factor (725 aa).

Residues 572 to 592 (TSPDESPAVVSVNNQPSSSPS) form a disordered region. Over residues 577–592 (SPAVVSVNNQPSSSPS) the composition is skewed to low complexity.

The protein localises to the nucleus. Acts as a transcriptional activator that mediates the calcium- and neuron-selective induction of BDNF exon III transcription. Binds to the consensus calcium-response element CaRE1 5'-CTATTTCGAG-3' sequence. The protein is Calcium-responsive transcription factor (CARF) of Homo sapiens (Human).